The primary structure comprises 689 residues: Methionine--tRNA ligase (689 aa).

A 'HIGH' region motif is present at residues 15–25 (PYANGPIHLGH). C146, C149, C159, and C162 together coordinate Zn(2+). The short motif at 332 to 336 (KMSKS) is the 'KMSKS' region element. K335 is a binding site for ATP. The tRNA-binding domain maps to 588-689 (DFAKIDLRIA…EGAQPGMRVK (102 aa)).

This sequence belongs to the class-I aminoacyl-tRNA synthetase family. MetG type 1 subfamily. As to quaternary structure, homodimer. Zn(2+) serves as cofactor.

It localises to the cytoplasm. The catalysed reaction is tRNA(Met) + L-methionine + ATP = L-methionyl-tRNA(Met) + AMP + diphosphate. Its function is as follows. Is required not only for elongation of protein synthesis but also for the initiation of all mRNA translation through initiator tRNA(fMet) aminoacylation. This is Methionine--tRNA ligase from Shewanella sp. (strain W3-18-1).